The following is an 87-amino-acid chain: Small ribosomal subunit protein uS17 (87 aa).

This sequence belongs to the universal ribosomal protein uS17 family. Part of the 30S ribosomal subunit.

In terms of biological role, one of the primary rRNA binding proteins, it binds specifically to the 5'-end of 16S ribosomal RNA. The protein is Small ribosomal subunit protein uS17 of Staphylococcus aureus (strain Mu3 / ATCC 700698).